A 96-amino-acid polypeptide reads, in one-letter code: Protein S100-A10 (96 aa).

The ancestral calcium site stretch occupies residues 62–73; it reads DDCRKGQVNFRS.

This sequence belongs to the S-100 family. Tetramer of 2 light chains (p10) and 2 heavy chains (annexin II).

Because p10 induces the dimerization of annexin II (p36), it may function as a regulator of protein phosphorylation in that the p36 monomer is the preferred target (in vitro) of tyrosine-specific kinase. This is Protein S100-A10 (s100a10) from Xenopus laevis (African clawed frog).